The sequence spans 345 residues: GTPase Obg (345 aa).

The region spanning 1–159 (MHFLDQAKIF…MWVWLRLKLL (159 aa)) is the Obg domain. The segment at 121-142 (GDGGRGNASYKTSTNRAPRQHG) is disordered. The OBG-type G domain occupies 160–327 (ADCGLVGLPN…VLDKIIEILG (168 aa)). GTP contacts are provided by residues 166–173 (GLPNAGKS), 191–195 (FTTIR), 212–215 (DIPG), 279–282 (NKID), and 308–310 (SGA). Mg(2+) contacts are provided by Ser173 and Thr193.

The protein belongs to the TRAFAC class OBG-HflX-like GTPase superfamily. OBG GTPase family. In terms of assembly, monomer. It depends on Mg(2+) as a cofactor.

It localises to the cytoplasm. In terms of biological role, an essential GTPase which binds GTP, GDP and possibly (p)ppGpp with moderate affinity, with high nucleotide exchange rates and a fairly low GTP hydrolysis rate. Plays a role in control of the cell cycle, stress response, ribosome biogenesis and in those bacteria that undergo differentiation, in morphogenesis control. The chain is GTPase Obg from Rhizorhabdus wittichii (strain DSM 6014 / CCUG 31198 / JCM 15750 / NBRC 105917 / EY 4224 / RW1) (Sphingomonas wittichii).